The chain runs to 443 residues: Probable D-serine dehydratase (443 aa).

Lys-116 is subject to N6-(pyridoxal phosphate)lysine.

The protein belongs to the serine/threonine dehydratase family. DsdA subfamily. The cofactor is pyridoxal 5'-phosphate.

The catalysed reaction is D-serine = pyruvate + NH4(+). The polypeptide is Probable D-serine dehydratase (Bacillus cereus (strain G9842)).